A 252-amino-acid chain; its full sequence is 5-oxoprolinase subunit A 1 (252 aa).

The protein belongs to the LamB/PxpA family. As to quaternary structure, forms a complex composed of PxpA, PxpB and PxpC.

It carries out the reaction 5-oxo-L-proline + ATP + 2 H2O = L-glutamate + ADP + phosphate + H(+). Functionally, catalyzes the cleavage of 5-oxoproline to form L-glutamate coupled to the hydrolysis of ATP to ADP and inorganic phosphate. This Bordetella bronchiseptica (strain ATCC BAA-588 / NCTC 13252 / RB50) (Alcaligenes bronchisepticus) protein is 5-oxoprolinase subunit A 1.